Consider the following 342-residue polypeptide: MTSDPGSALQHRKRRHIDVCLTEAVDYQSLTTGFERYRLPYNALTQTDLHSVDLSTEFLGSHLRAPVLIGAMTGGAALSGIINRNLAAAAQQLGIGMMLGSQRVMIDDEAAAASFEVRGVAPDILLIGNIGLAQLRSSMVPGLAAALDRVGANGLAVHTNPLQEAMQHDGDTDFSGSIGRLCDVAGAIGYPVVLKEVGHGIGAAAAAELVGCPIAAIDVAGAGGTSWARIEQFVRYGDVRYPALAEWGVPTAQALTEVRQMLPDVPLVASGGIRTGMDAAKALAMGARVVAVARPLLAPAVESVEAVVDWLQRFIDELLVCLHGCGAANLSALRGRGVTELP.

12–13 (RK) contributes to the substrate binding site. FMN-binding positions include 71 to 73 (AMT), Ser-101, and Asn-129. Residue 101–103 (SQR) participates in substrate binding. A substrate-binding site is contributed by Gln-163. Glu-164 contributes to the Mg(2+) binding site. Residues Lys-195, Thr-225, 272–274 (GIR), and 293–294 (AR) each bind FMN.

It belongs to the IPP isomerase type 2 family. Homooctamer. Dimer of tetramers. The cofactor is FMN. NADPH serves as cofactor. Mg(2+) is required as a cofactor.

The protein resides in the cytoplasm. The catalysed reaction is isopentenyl diphosphate = dimethylallyl diphosphate. Involved in the biosynthesis of isoprenoids. Catalyzes the 1,3-allylic rearrangement of the homoallylic substrate isopentenyl (IPP) to its allylic isomer, dimethylallyl diphosphate (DMAPP). This Mycolicibacterium vanbaalenii (strain DSM 7251 / JCM 13017 / BCRC 16820 / KCTC 9966 / NRRL B-24157 / PYR-1) (Mycobacterium vanbaalenii) protein is Isopentenyl-diphosphate delta-isomerase.